Reading from the N-terminus, the 8081-residue chain is Muscle M-line assembly protein unc-89 (8081 aa).

A disordered region spans residues 24–57 (DVNYSTHSSRSSYRSESLTSRTDGRGRSTSSEII). Over residues 28–54 (STHSSRSSYRSESLTSRTDGRGRSTSS) the composition is skewed to low complexity. An SH3 domain is found at 63 to 127 (RSYPVYIAIQ…PGSYFETPTE (65 aa)). The region spanning 152–330 (KRDQVYHELL…TTIPQRVHDL (179 aa)) is the DH domain. The 157-residue stretch at 342-498 (DTGKLGRIIR…WSGSRKSSLF (157 aa)) folds into the PH domain. Residues 479–495 (ASDQQSEFSEWSGSRKS) show a composition bias toward polar residues. Positions 479–531 (ASDQQSEFSEWSGSRKSSLFPGPEEGGPPRKKVKSPPVISPTGSSTSIYSGGS) are disordered. Residues 518 to 531 (SPTGSSTSIYSGGS) show a composition bias toward low complexity. Ig-like C2-type domains are found at residues 547–633 (GTRV…ASTS), 648–736 (PAFV…AELF), 748–838 (PEFQ…LKVR), 946–1033 (PTFL…ARLV), 1044–1132 (PKFV…AKLT), and 1140–1227 (PEFD…NTLG). Residues Cys-568 and Cys-621 are joined by a disulfide bond. 2 stretches are compositionally biased toward low complexity: residues 1283–1303 (STKTTTMSTTEVTSTVGGVTV) and 1326–1335 (EGSISVSKIE). The interval 1283 to 1892 (STKTTTMSTT…PAPKLTRDLK (610 aa)) is disordered. 6 stretches are compositionally biased toward basic and acidic residues: residues 1336–1351 (VVSKTDSQTDVREGTP), 1361–1446 (ELPK…KEKS), 1453–1490 (KTGDEVKEKSPPKSPTKKEKSPEKPEDVKSPVKKEKSP), 1515–1585 (MTHE…KSPE), 1592–1832 (KKSE…KEKS), and 1839–1857 (KTGDESKEKSPEKPEEKPK). RCSD domains lie at 1375 to 1475 (KSPS…KSPE), 1479 to 1585 (DVKS…KSPE), 1597 to 1695 (EVKS…KSPQ), and 1700 to 1799 (KPAS…KSPE). The segment covering 1858 to 1868 (SPTPKKSPPGS) has biased composition (pro residues). Positions 1875 to 1892 (KSPEAEKPPAPKLTRDLK) are enriched in basic and acidic residues. 41 Ig-like C2-type domains span residues 1982 to 2067 (PEFT…AQLT), 2071 to 2163 (PSTT…ADLK), 2171 to 2261 (PKFK…AKVT), 2269 to 2359 (PEFV…AQLK), 2367 to 2455 (PKFT…VQLA), 2463 to 2564 (PTFA…AKPA), 2563 to 2651 (PAFQ…GPLK), 2657 to 2746 (PVEF…ATLL), 2754 to 2858 (PDFL…SEAQ), 2887 to 2980 (PKFI…ATLT), 2994 to 3081 (PEFI…AFLT), 3087 to 3183 (PVFT…SKIT), 3189 to 3280 (PVFE…AEVT), 3286 to 3376 (PTFV…ANFA), 3384 to 3469 (PEFV…EALT), 3482 to 3572 (PEFT…ANMA), 3580 to 3667 (PLFV…ETVG), 3686 to 3777 (PLFI…LKIQ), 3817 to 3908 (PEFV…IIVT), 3920 to 4009 (PDFL…VTLT), 4018 to 4106 (PGFF…VPLT), 4109 to 4201 (PSET…ATVT), 4212 to 4297 (PSFK…AKVN), 4302 to 4387 (PEIV…AALT), 4400 to 4485 (PEIV…AALT), 4489 to 4580 (PGIA…CALT), 4588 to 4678 (PKII…GKIT), 4681 to 4771 (PKIT…AQLT), 4873 to 4961 (PEIV…AALT), 4965 to 5057 (PNVL…GSVV), 5067 to 5160 (PTSG…CKVT), 5171 to 5260 (PKFV…CEFQ), 5277 to 5366 (PRFN…ATYQ), 5383 to 5472 (PKIN…CSVN), 5487 to 5578 (PFFT…AHVQ), 5595 to 5685 (PKFI…SFVR), 5701 to 5790 (PRFT…GTAT), 5815 to 5904 (PKLM…CDVN), 5925 to 6014 (PGFT…AELV), 6038 to 6130 (PRIR…GSLN), and 6150 to 6239 (PGFV…AVLD). Cys-2582 and Cys-2635 are disulfide-bonded. Disulfide bonds link Cys-2908/Cys-2964 and Cys-3015/Cys-3065. 2 disulfide bridges follow: Cys-3707–Cys-3759 and Cys-3838–Cys-3890. The interval 4525–4553 (KNGKEITPSDKAQPGSDGDNKPQLVIPDA) is disordered. 4 disulfide bridges follow: Cys-5298-Cys-5350, Cys-5404-Cys-5456, Cys-5508-Cys-5560, and Cys-5616-Cys-5669. 2 disulfides stabilise this stretch: Cys-5836–Cys-5888 and Cys-5946–Cys-5998. One can recognise a Fibronectin type-III 1 domain in the interval 6278 to 6374 (PDRGPFIKEV…SPPSRLMAPP (97 aa)). Ig-like C2-type domains are found at residues 6413–6502 (PGVV…IMVD) and 6507–6596 (PNFI…CTVT). Residues 6592–6878 (SCTVTVEAEG…VDEALDHPWI (287 aa)) enclose the Protein kinase 1 domain. Disordered regions lie at residues 6954 to 7130 (KKPP…QQKI), 7177 to 7217 (QVEA…PQPQ), 7284 to 7311 (PAINLSPNPKSPRRSTPGTKSPVVLSPR), 7324 to 7343 (RGKPGFLPPGELAEDIDDED), and 7348 to 7372 (DRKKQVKPKDHDGENDFKDEKERLE). Residues 6999-7009 (RQPPQIPPQPQ) are compositionally biased toward pro residues. Residues 7087–7110 (LEKRKLIPQDKGETPSHSKKEKTQ) are compositionally biased toward basic and acidic residues. Over residues 7200–7215 (KPTPSPTSPQKSPVPQ) the composition is skewed to pro residues. The span at 7284–7302 (PAINLSPNPKSPRRSTPGT) shows a compositional bias: polar residues. The Ig-like C2-type 50 domain occupies 7528–7617 (PIFTARLRDV…TDKSSCRLIS (90 aa)). Cysteines 7549 and 7600 form a disulfide. Residues 7623–7721 (RPGRPEAELS…SSRIVQTHGK (99 aa)) form the Fibronectin type-III 2 domain. Residues 7746–7773 (STNQLGGISEESEEDSEARTANEDMKSN) are disordered. The segment covering 7762–7771 (EARTANEDMK) has biased composition (basic and acidic residues). The Protein kinase 2 domain maps to 7785–8035 (FQIGGLKFKG…TDEALSHKFL (251 aa)).

It belongs to the protein kinase superfamily. CAMK Ser/Thr protein kinase family. In terms of assembly, may interact (via fibronectin type-III domain 1, Ig-like C2-type domain 48/49 and protein kinase domain 1 or C-terminus of the interkinase region) with lim-9 (via LIM zinc-binding domain). May interact (via fibronectin type-III domain 1, Ig-like C2-type domain 48/49 and kinase protein domain 1 or Ig-like C2-type domain 50, fibronectin type-III domain 2 and kinase protein domain 2) with scpl-1 isoforms a and b (via FCP1 homology domain); the interaction may act as a molecular bridge to bring two unc-89 molecules together or to stabilize a loop between the 2 kinase domains. May interact (via SH3 domain) with unc-15. May interact (via Ig-like C2-type domain 1-3) with cpna-1 (via VWFA domain). May interact (via Ig-like C2-type domain 2/3 and, Ig-like C2-type domain 50 and fibronectin type-III domain 2) with mel-26 (via MATH domain). May interact (via DH and PH domains) with rho-1, ced-10, mig-2 and cdc-42. Expressed in body-wall, pharyngeal muscles and a few muscle cells of the tail (at protein level). Expressed in gonadal myoepithelial sheath cells (at protein level). Isoform c: Expressed in body wall and vulval muscles but not in pharyngeal muscles. Isoform d: Specifically expressed in vulval, intestinal, anal depressor and anal sphincter muscles.

It is found in the cytoplasm. The protein resides in the myofibril. The protein localises to the sarcomere. Its subcellular location is the m line. Its function is as follows. Structural component of the muscle M line which is involved in assembly and organization of sarcomere myofilaments. The large isoform a, isoform b, isoform d and isoform f play an essential role in maintaining the organization of sarcomeres but not myofilament alignment during body wall muscle development whereas the small isoform c and isoform d appear to have a minor role. Isoform b and isoform f are required for the organization of unc-15/paramyosin into sarcomere thick filaments in body wall muscles. By binding mel-26, a substrate adapter of the cul-3 E3 ubiquitin-protein ligase complex, regulates the organization of myosin thick filaments, likely by preventing the degradation of microtubule severing protein mei-1. Acts as a guanine nucleotide exchange factor (GEF) for Rho GTPase rho-1 but not ced-10, mig-2 and cdc-42. The large isoforms regulate Ca(2+) signaling during muscle contraction by ensuring the correct localization of sarco-endoplamic reticulum Ca(2+) ATPase sca-1 and ryanodine receptor unc-68. By controlling the contraction and/or organization of pharyngeal muscles, plays a role in the formation of pharyngeal gland cell extension. The protein is Muscle M-line assembly protein unc-89 (unc-89) of Caenorhabditis elegans.